Here is a 432-residue protein sequence, read N- to C-terminus: Phosphomethylpyrimidine synthase (432 aa).

Substrate contacts are provided by residues Asn-66, Met-95, Tyr-124, His-163, 185 to 187 (SRG), 226 to 229 (DGLR), and Glu-265. His-269 provides a ligand contact to Zn(2+). Substrate is bound at residue Tyr-292. Residue His-333 participates in Zn(2+) binding. [4Fe-4S] cluster contacts are provided by Cys-409, Cys-412, and Cys-416.

It belongs to the ThiC family. [4Fe-4S] cluster serves as cofactor.

It catalyses the reaction 5-amino-1-(5-phospho-beta-D-ribosyl)imidazole + S-adenosyl-L-methionine = 4-amino-2-methyl-5-(phosphooxymethyl)pyrimidine + CO + 5'-deoxyadenosine + formate + L-methionine + 3 H(+). The protein operates within cofactor biosynthesis; thiamine diphosphate biosynthesis. Its function is as follows. Catalyzes the synthesis of the hydroxymethylpyrimidine phosphate (HMP-P) moiety of thiamine from aminoimidazole ribotide (AIR) in a radical S-adenosyl-L-methionine (SAM)-dependent reaction. In Desulfitobacterium hafniense (strain DSM 10664 / DCB-2), this protein is Phosphomethylpyrimidine synthase.